A 702-amino-acid polypeptide reads, in one-letter code: MHWMLLVSLLLLLWLLVASPRLAWLKAGLLSLFLLLLSAWGLVDRLSGDGINAATLYHLRADMDGAGVSDFSGYIAVFVGMLLLSLSPLLLVRIRRFQRPRGGGAVFAGFVGMLLVGIAASPLYRDGKRLYYQLRPVDYATVVPEYQVPQQPLHKRKNIVWIYGESLERTYFDEQVFPGLMPNLRAVATEAVDVRNLASTEGSGWTIAGMVASMCGVPLTTAPGDENSMDRMGMFLPEARCLGDYLKDQGYRNHYVGGADASFAGKGRFLSSHGFDVVHDVHYFQDQGVAPKHFSAWGVHDDVLLDDAWDTFQTLSRAGQPFLLTTLTMDTHHPAGHLPSACKGQQYDSPLGDIGLLHAIKCSDRLIGELVARIRNSRYGKNTIIVIASDHLAMPNDLSDVLAKQKRENLLLFLGEDIAPQQVVTRAGSTLDSGATLLQLLEPGMRTLGFGRSFLASDAPPSASAAASRDSGKDYPRYLAYARTLWTGRSTRMLRINGNGDVVVGVQQVRPPVLLEYDKDTNLKTVYLENTSRQFDRTHSKGTLAYVDRCTAFEDGSADGDWCALVVDRHQSMKLYRDPDLARGIAIDAPLEATQQGPRPRVRQPIMLTQAARKTDAGRYMLELYAKRRPTRAFWVEAVSSERKVVLAQQWVVPDAAGRIRMPVGLEHAVEDLEIRAWLDYTEDVSVDDLALVKDIPVADRS.

The next 3 helical transmembrane spans lie at 5 to 24, 73 to 95, and 102 to 124; these read LLVS…RLAW, GYIA…VRIR, and GGGA…SPLY.

The protein belongs to the OpgB family.

The protein localises to the cell inner membrane. It catalyses the reaction a phosphatidylglycerol + a membrane-derived-oligosaccharide D-glucose = a 1,2-diacyl-sn-glycerol + a membrane-derived-oligosaccharide 6-(glycerophospho)-D-glucose.. It functions in the pathway glycan metabolism; osmoregulated periplasmic glucan (OPG) biosynthesis. Transfers a phosphoglycerol residue from phosphatidylglycerol to the membrane-bound nascent glucan backbones. This is Phosphoglycerol transferase I from Xanthomonas axonopodis pv. citri (strain 306).